The primary structure comprises 464 residues: Probable glycine dehydrogenase (decarboxylating) subunit 1 (464 aa).

It belongs to the GcvP family. N-terminal subunit subfamily. The glycine cleavage system is composed of four proteins: P, T, L and H. In this organism, the P 'protein' is a heterodimer of two subunits.

The enzyme catalyses N(6)-[(R)-lipoyl]-L-lysyl-[glycine-cleavage complex H protein] + glycine + H(+) = N(6)-[(R)-S(8)-aminomethyldihydrolipoyl]-L-lysyl-[glycine-cleavage complex H protein] + CO2. Functionally, the glycine cleavage system catalyzes the degradation of glycine. The P protein binds the alpha-amino group of glycine through its pyridoxal phosphate cofactor; CO(2) is released and the remaining methylamine moiety is then transferred to the lipoamide cofactor of the H protein. This chain is Probable glycine dehydrogenase (decarboxylating) subunit 1, found in Thiobacillus denitrificans (strain ATCC 25259 / T1).